The following is a 528-amino-acid chain: Glucosidase 2 subunit beta (528 aa).

Positions 1 to 14 (MLLPLLLLLPMCWA) are cleaved as a signal peptide. S24 is subject to Phosphoserine; by FAM20C. LDL-receptor class A domains are found at residues 37–71 (FTCL…AACP) and 72–113 (NGSF…VICE). 2 disulfide bridges follow: C39–C58 and C56–C70. Position 49 (D49) interacts with substrate. Residues Q50, D53, Y55, D57, D63, and E64 each contribute to the Ca(2+) site. D53 serves as a coordination point for substrate. Residue N72 is glycosylated (N-linked (GlcNAc...) asparagine). Cystine bridges form between C77/C99, C97/C112, and C100/C116. Phosphoserine; by PKC is present on S89. 6 residues coordinate Ca(2+): R91, D94, V96, D98, D104, and E105. K166 is modified (N6-succinyllysine). S168 bears the Phosphoserine; by FAM20C mark. 2 EF-hand domains span residues 209–244 (QEQE…DTDG) and 245–290 (DGAL…TDLP). 5 residues coordinate Ca(2+): D222, D224, D226, T228, and E233. Disordered regions lie at residues 234–266 (LQTH…TDAT) and 281–357 (RSEA…DKMP). Residues 247–258 (ALSEAEAQALLS) show a composition bias toward low complexity. Positions 312–337 (TEEEEEEEEEEEEEAEEEEEEEDSEE) are enriched in acidic residues. Residues 338–348 (APPPLSPPQPA) are compositionally biased toward pro residues. Phosphoserine; by PKC is present on residues S383 and S390. Residues 413–514 (SQCYELTTNE…ELMTPAACPE (102 aa)) form the MRH domain. The cysteines at positions 415 and 428 are disulfide-linked. Phosphoserine; by PKC is present on S434. 2 disulfide bridges follow: C471/C500 and C485/C512. A glycan (N-linked (GlcNAc...) asparagine) is linked at N476. Residues 525–528 (HDEL) carry the Prevents secretion from ER motif.

Heterodimer of a catalytic alpha subunit (GANAB) and a beta subunit (PRKCSH). Binds glycosylated PTPRC.

It is found in the endoplasmic reticulum. Its pathway is glycan metabolism; N-glycan metabolism. Regulatory subunit of glucosidase II that cleaves sequentially the 2 innermost alpha-1,3-linked glucose residues from the Glc(2)Man(9)GlcNAc(2) oligosaccharide precursor of immature glycoproteins. Required for efficient PKD1/Polycystin-1 biogenesis and trafficking to the plasma membrane of the primary cilia. The protein is Glucosidase 2 subunit beta of Homo sapiens (Human).